We begin with the raw amino-acid sequence, 438 residues long: MQTIYTKITDIKGNLITVEAEGARLGELAEIERVDGRSSYASVLRFDAKKVTLQVFGGTSGLSTGDRVIFLGRAMEVTYGESLIGRRLSGIGKPIDGEGECFGDPIAISTPTFNPVCRIVPRDMVRTNIPMIDMFNCLVKSQKIPIFSSSGENHNALLMRIAAQTDADIVIIGGMGLTFVDYSFFVEESKRLGFSDKCVMFIHKAVDAPVECVLIPDMALACAEKFAVDHNKNVLVLLTDMTAFADALKEIAITMDQIPANRGYPGSLYSDLALRYEKAVDIAKGGSITLISVTTMPGDDITHPVPDNTGFITEGQFYLKNNRIDPFGSLSRLKQLVIGKVTREDHGDLANSLIRLYADSRKAAERMAMGFKLSNWDKKLLAFAELFETRLMSLEVNIPLEEALDIGWKILAQSFHSEEVGIKEQLINKYWPKSCLHR.

It belongs to the ATPase alpha/beta chains family.

Functionally, produces ATP from ADP in the presence of a proton gradient across the membrane. The V-type beta chain is a regulatory subunit. The protein is V-type ATP synthase beta chain of Chlamydia felis (strain Fe/C-56) (Chlamydophila felis).